The sequence spans 554 residues: (E)-beta-caryophyllene synthase (554 aa).

The Mn(2+) site is built by Asp313 and Asp317. A DDXXD motif motif is present at residues 313–317 (DDTYD). 2 homodimerization regions span residues 319–325 (YGTLDEL) and 391–427 (EAQW…LAVI). Mn(2+)-binding residues include Asp457 and Glu465.

Belongs to the terpene synthase family. Homodimer. It depends on Mn(2+) as a cofactor. Mg(2+) serves as cofactor. As to expression, expressed in peltate glandular trichomes. Present at low levels in flowers, leaves and stems.

The enzyme catalyses (2E,6E)-farnesyl diphosphate = (-)-(E)-beta-caryophyllene + diphosphate. It carries out the reaction (2E,6E)-farnesyl diphosphate = alpha-humulene + diphosphate. It participates in secondary metabolite biosynthesis; terpenoid biosynthesis. Involved in the biosynthesis of phenolic sesquiterpenes natural products. Sesquiterpene synthase converting (2E,6E)-farnesyl diphosphate (FPP) to (E)-beta-caryophyllene and alpha-humulene. The chain is (E)-beta-caryophyllene synthase from Origanum vulgare (Wild marjoram).